The chain runs to 312 residues: MDDKEILLANPRGFCAGVERAIEIVEQALARFGAPIYVRHEVVHNKFVVDGLRAKGAIFVEELDEVPTGQTVIFSAHGVPQAVRSEAERRGLRVFDATCPLVTKVHLEVARMREQGREIVMIGHKGHPEVEGTMGQVGDGIHLVEVVQDVANIEVADPQQLAYVTQTTLSVDDAATLVAALRARFPAIVGPKKDDICYATQNRQDAVKFMAPRVDVVFVVGSRNSSNSNRLREVAELLGVPAYLVDNAEGIEPIWLEDKKRVGVTAGASAPEVLVDAVVERLKELGASSVRTLEGVPERVTFPLPRELQTPD.

Cys-15 contacts [4Fe-4S] cluster. (2E)-4-hydroxy-3-methylbut-2-enyl diphosphate is bound by residues His-44 and His-77. Dimethylallyl diphosphate-binding residues include His-44 and His-77. Residues His-44 and His-77 each coordinate isopentenyl diphosphate. A [4Fe-4S] cluster-binding site is contributed by Cys-99. His-127 serves as a coordination point for (2E)-4-hydroxy-3-methylbut-2-enyl diphosphate. Dimethylallyl diphosphate is bound at residue His-127. His-127 is a binding site for isopentenyl diphosphate. Glu-129 acts as the Proton donor in catalysis. A (2E)-4-hydroxy-3-methylbut-2-enyl diphosphate-binding site is contributed by Thr-167. Position 197 (Cys-197) interacts with [4Fe-4S] cluster. (2E)-4-hydroxy-3-methylbut-2-enyl diphosphate-binding residues include Ser-225, Ser-226, Asn-227, and Ser-269. Dimethylallyl diphosphate is bound by residues Ser-225, Ser-226, Asn-227, and Ser-269. Residues Ser-225, Ser-226, Asn-227, and Ser-269 each coordinate isopentenyl diphosphate.

This sequence belongs to the IspH family. The cofactor is [4Fe-4S] cluster.

The enzyme catalyses isopentenyl diphosphate + 2 oxidized [2Fe-2S]-[ferredoxin] + H2O = (2E)-4-hydroxy-3-methylbut-2-enyl diphosphate + 2 reduced [2Fe-2S]-[ferredoxin] + 2 H(+). It catalyses the reaction dimethylallyl diphosphate + 2 oxidized [2Fe-2S]-[ferredoxin] + H2O = (2E)-4-hydroxy-3-methylbut-2-enyl diphosphate + 2 reduced [2Fe-2S]-[ferredoxin] + 2 H(+). Its pathway is isoprenoid biosynthesis; dimethylallyl diphosphate biosynthesis; dimethylallyl diphosphate from (2E)-4-hydroxy-3-methylbutenyl diphosphate: step 1/1. The protein operates within isoprenoid biosynthesis; isopentenyl diphosphate biosynthesis via DXP pathway; isopentenyl diphosphate from 1-deoxy-D-xylulose 5-phosphate: step 6/6. Its function is as follows. Catalyzes the conversion of 1-hydroxy-2-methyl-2-(E)-butenyl 4-diphosphate (HMBPP) into a mixture of isopentenyl diphosphate (IPP) and dimethylallyl diphosphate (DMAPP). Acts in the terminal step of the DOXP/MEP pathway for isoprenoid precursor biosynthesis. The sequence is that of 4-hydroxy-3-methylbut-2-enyl diphosphate reductase from Aromatoleum aromaticum (strain DSM 19018 / LMG 30748 / EbN1) (Azoarcus sp. (strain EbN1)).